The sequence spans 90 residues: Acylphosphatase (90 aa).

The Acylphosphatase-like domain maps to 3–90 (HYHAIITGRV…AHYQDFRIKG (88 aa)). Catalysis depends on residues Arg18 and Asn36.

The protein belongs to the acylphosphatase family.

The enzyme catalyses an acyl phosphate + H2O = a carboxylate + phosphate + H(+). This chain is Acylphosphatase (acyP), found in Bacillus pumilus (strain SAFR-032).